The primary structure comprises 567 residues: Phenylalanine--tRNA ligase beta subunit (567 aa).

The region spanning Phe-284–Pro-359 is the B5 domain. 4 residues coordinate Mg(2+): Asp-337, Asp-343, Asp-346, and Asp-347.

Belongs to the phenylalanyl-tRNA synthetase beta subunit family. Type 2 subfamily. In terms of assembly, tetramer of two alpha and two beta subunits. Requires Mg(2+) as cofactor.

Its subcellular location is the cytoplasm. It carries out the reaction tRNA(Phe) + L-phenylalanine + ATP = L-phenylalanyl-tRNA(Phe) + AMP + diphosphate + H(+). This Halobacterium salinarum (strain ATCC 29341 / DSM 671 / R1) protein is Phenylalanine--tRNA ligase beta subunit.